Consider the following 96-residue polypeptide: Aspartyl/glutamyl-tRNA(Asn/Gln) amidotransferase subunit C (96 aa).

The protein belongs to the GatC family. In terms of assembly, heterotrimer of A, B and C subunits.

It catalyses the reaction L-glutamyl-tRNA(Gln) + L-glutamine + ATP + H2O = L-glutaminyl-tRNA(Gln) + L-glutamate + ADP + phosphate + H(+). The catalysed reaction is L-aspartyl-tRNA(Asn) + L-glutamine + ATP + H2O = L-asparaginyl-tRNA(Asn) + L-glutamate + ADP + phosphate + 2 H(+). Functionally, allows the formation of correctly charged Asn-tRNA(Asn) or Gln-tRNA(Gln) through the transamidation of misacylated Asp-tRNA(Asn) or Glu-tRNA(Gln) in organisms which lack either or both of asparaginyl-tRNA or glutaminyl-tRNA synthetases. The reaction takes place in the presence of glutamine and ATP through an activated phospho-Asp-tRNA(Asn) or phospho-Glu-tRNA(Gln). The protein is Aspartyl/glutamyl-tRNA(Asn/Gln) amidotransferase subunit C of Bacillus velezensis (strain DSM 23117 / BGSC 10A6 / LMG 26770 / FZB42) (Bacillus amyloliquefaciens subsp. plantarum).